The following is a 190-amino-acid chain: Large ribosomal subunit protein uL22 (190 aa).

The segment at 111–190 is disordered; sequence SVQSTKAKAK…TKKKTEGEEK (80 aa). Basic and acidic residues predominate over residues 125-147; sequence IKSEDSKNSLKVTESKADSKVDA. A compositionally biased stretch (low complexity) spans 167 to 178; it reads AKVATTKSTATR.

It belongs to the universal ribosomal protein uL22 family. In terms of assembly, part of the 50S ribosomal subunit.

Its function is as follows. This protein binds specifically to 23S rRNA; its binding is stimulated by other ribosomal proteins, e.g. L4, L17, and L20. It is important during the early stages of 50S assembly. It makes multiple contacts with different domains of the 23S rRNA in the assembled 50S subunit and ribosome. In terms of biological role, the globular domain of the protein is located near the polypeptide exit tunnel on the outside of the subunit, while an extended beta-hairpin is found that lines the wall of the exit tunnel in the center of the 70S ribosome. The polypeptide is Large ribosomal subunit protein uL22 (Helicobacter hepaticus (strain ATCC 51449 / 3B1)).